The chain runs to 480 residues: Transposase for transposon Tn552 (480 aa).

A DNA-binding region (H-T-H motif) is located at residues leucine 36 to lysine 55. The Integrase catalytic domain occupies glutamate 155–histidine 341. A disordered region spans residues arginine 438–aspartate 480. Over residues asparagine 470–aspartate 480 the composition is skewed to basic residues.

This chain is Transposase for transposon Tn552, found in Staphylococcus aureus.